The chain runs to 505 residues: Chromatin assembly factor 1 subunit FAS2 homolog (505 aa).

WD repeat units follow at residues 11–50 (HEQQ…SDKK), 62–101 (SHSS…DGEA), 110–149 (FHHK…VQQK), 152–191 (GHLH…KSKN), 223–268 (FHDE…SRRD), 278–333 (GASK…PILI), and 337–378 (LHYA…LPYN). The interval 479-505 (VTAPPVSTKNSASSKPTKKRITPIAIN) is disordered.

Belongs to the WD repeat HIR1 family. Component of the chromatin assembly factor 1 (CAF-1) complex, composed of FSM (FAS1), FAS2 and MSI1.

It localises to the nucleus. Its function is as follows. Component of the chromatin assembly factor complex (CAF-1) involved in chromatin assembly following DNA replication and DNA repair. Required for several aspects of development, including apical meristem maintenance by regulating the durations of the S- and G2-phases of the cell cycle through its chromatin assembly activity. The sequence is that of Chromatin assembly factor 1 subunit FAS2 homolog (FAS2) from Oryza sativa subsp. japonica (Rice).